A 243-amino-acid chain; its full sequence is Putative outer membrane protein RP075 (243 aa).

Positions 1 to 23 are cleaved as a signal peptide; the sequence is MLRIVKKLWVILFISNISINSFA.

It belongs to the OmpW/AlkL family.

It localises to the cell outer membrane. In Rickettsia prowazekii (strain Madrid E), this protein is Putative outer membrane protein RP075.